Reading from the N-terminus, the 179-residue chain is Protein GrpE (179 aa).

This sequence belongs to the GrpE family. Homodimer.

It localises to the cytoplasm. In terms of biological role, participates actively in the response to hyperosmotic and heat shock by preventing the aggregation of stress-denatured proteins, in association with DnaK and GrpE. It is the nucleotide exchange factor for DnaK and may function as a thermosensor. Unfolded proteins bind initially to DnaJ; upon interaction with the DnaJ-bound protein, DnaK hydrolyzes its bound ATP, resulting in the formation of a stable complex. GrpE releases ADP from DnaK; ATP binding to DnaK triggers the release of the substrate protein, thus completing the reaction cycle. Several rounds of ATP-dependent interactions between DnaJ, DnaK and GrpE are required for fully efficient folding. This Rickettsia felis (strain ATCC VR-1525 / URRWXCal2) (Rickettsia azadi) protein is Protein GrpE.